Consider the following 442-residue polypeptide: tRNA modification GTPase MnmE (442 aa).

(6S)-5-formyl-5,6,7,8-tetrahydrofolate is bound by residues Arg23, Glu82, and Lys121. The region spanning 217 to 363 is the TrmE-type G domain; sequence PFKIAIIGET…LVDLLTKYIN (147 aa). Position 227 (Asn227) interacts with K(+). Residues 227 to 232, 246 to 252, and 271 to 274 contribute to the GTP site; these read NVGKSS, SNIKGST, and DTAG. Ser231 contributes to the Mg(2+) binding site. Positions 246, 248, and 251 each coordinate K(+). Thr252 provides a ligand contact to Mg(2+). Position 442 (Lys442) interacts with (6S)-5-formyl-5,6,7,8-tetrahydrofolate.

It belongs to the TRAFAC class TrmE-Era-EngA-EngB-Septin-like GTPase superfamily. TrmE GTPase family. In terms of assembly, homodimer. Heterotetramer of two MnmE and two MnmG subunits. It depends on K(+) as a cofactor.

The protein localises to the cytoplasm. Its function is as follows. Exhibits a very high intrinsic GTPase hydrolysis rate. Involved in the addition of a carboxymethylaminomethyl (cmnm) group at the wobble position (U34) of certain tRNAs, forming tRNA-cmnm(5)s(2)U34. The polypeptide is tRNA modification GTPase MnmE (Mycoplasma genitalium (strain ATCC 33530 / DSM 19775 / NCTC 10195 / G37) (Mycoplasmoides genitalium)).